The chain runs to 27 residues: Superoxide dismutase [Mn] (27 aa).

Belongs to the iron/manganese superoxide dismutase family. Homodimer. Mn(2+) serves as cofactor.

The enzyme catalyses 2 superoxide + 2 H(+) = H2O2 + O2. Its function is as follows. Destroys superoxide anion radicals which are normally produced within the cells and which are toxic to biological systems. This chain is Superoxide dismutase [Mn] (sodA), found in Desulfovibrio desulfuricans.